Reading from the N-terminus, the 465-residue chain is Putative adhesin P1-like protein MPN_286 (465 aa).

Disordered stretches follow at residues 9 to 48, 59 to 78, and 93 to 167; these read GNGH…STFS, QGTL…PKWP, and WRND…LPPN. The segment covering 21–37 has biased composition (low complexity); sequence SNSSTSGVTTQGQQSQN. Residues 38-48 show a composition bias toward polar residues; the sequence is ASGTEPASTFS. Residues 111-131 show a composition bias toward low complexity; that stretch reads TSATGSGQQGSSSGTTNSAGN. Positions 135–144 are enriched in basic and acidic residues; that stretch reads LKQDKVDKSG. A compositionally biased stretch (polar residues) spans 145 to 156; that stretch reads DSVTVAETTSGD. The segment covering 157–167 has biased composition (low complexity); that stretch reads NLTNYTNLPPN.

It belongs to the adhesin P1 family.

In Mycoplasma pneumoniae (strain ATCC 29342 / M129 / Subtype 1) (Mycoplasmoides pneumoniae), this protein is Putative adhesin P1-like protein MPN_286.